The sequence spans 85 residues: ATP synthase subunit c (85 aa).

The next 2 membrane-spanning stretches (helical) occupy residues 10-30 (IAVS…FGIL) and 53-73 (FIVA…ALLF).

The protein belongs to the ATPase C chain family. In terms of assembly, F-type ATPases have 2 components, F(1) - the catalytic core - and F(0) - the membrane proton channel. F(1) has five subunits: alpha(3), beta(3), gamma(1), delta(1), epsilon(1). F(0) has three main subunits: a(1), b(2) and c(10-14). The alpha and beta chains form an alternating ring which encloses part of the gamma chain. F(1) is attached to F(0) by a central stalk formed by the gamma and epsilon chains, while a peripheral stalk is formed by the delta and b chains.

The protein localises to the cell inner membrane. Functionally, f(1)F(0) ATP synthase produces ATP from ADP in the presence of a proton or sodium gradient. F-type ATPases consist of two structural domains, F(1) containing the extramembraneous catalytic core and F(0) containing the membrane proton channel, linked together by a central stalk and a peripheral stalk. During catalysis, ATP synthesis in the catalytic domain of F(1) is coupled via a rotary mechanism of the central stalk subunits to proton translocation. In terms of biological role, key component of the F(0) channel; it plays a direct role in translocation across the membrane. A homomeric c-ring of between 10-14 subunits forms the central stalk rotor element with the F(1) delta and epsilon subunits. This is ATP synthase subunit c from Idiomarina loihiensis (strain ATCC BAA-735 / DSM 15497 / L2-TR).